The chain runs to 34 residues: Photosystem II reaction center protein M (34 aa).

A helical transmembrane segment spans residues 5 to 25 (ILAFIATALFVLIPTAFLIIL).

Belongs to the PsbM family. As to quaternary structure, PSII is composed of 1 copy each of membrane proteins PsbA, PsbB, PsbC, PsbD, PsbE, PsbF, PsbH, PsbI, PsbJ, PsbK, PsbL, PsbM, PsbT, PsbX, PsbY, PsbZ, Psb30/Ycf12, at least 3 peripheral proteins of the oxygen-evolving complex and a large number of cofactors. It forms dimeric complexes.

Its subcellular location is the plastid. The protein localises to the chloroplast thylakoid membrane. In terms of biological role, one of the components of the core complex of photosystem II (PSII). PSII is a light-driven water:plastoquinone oxidoreductase that uses light energy to abstract electrons from H(2)O, generating O(2) and a proton gradient subsequently used for ATP formation. It consists of a core antenna complex that captures photons, and an electron transfer chain that converts photonic excitation into a charge separation. This subunit is found at the monomer-monomer interface. This Zygnema circumcarinatum (Green alga) protein is Photosystem II reaction center protein M.